Reading from the N-terminus, the 221-residue chain is Bcl-2-related ovarian killer protein homolog A (221 aa).

Positions 32–44 match the BH4 motif; the sequence is KVLCRDYIHSRLH. The short motif at 64–80 is the BH3 element; that stretch reads VSSVLLWLGDELEYLRP. A BH1 motif is present at residues 110–140; that stretch reads EIFSTEYSRKGLEKHKGVTWGKIVSLYAVAG. The BH2 signature appears at 173-187; that stretch reads WLKKRGGWADITKCV. Residues 198-218 traverse the membrane as a helical segment; sequence WLVTAACACGHYLKAVVFYLL.

Belongs to the Bcl-2 family. As to expression, strongest expression in ovary and eye, weaker expression in gut, kidney and brain. Little expression in liver or heart.

It is found in the membrane. Its function is as follows. May play a role in apoptosis. Does not appear to show pro-apoptotic activity when expressed ectopically in early embryos. This is Bcl-2-related ovarian killer protein homolog A from Danio rerio (Zebrafish).